Consider the following 402-residue polypeptide: Deoxyguanosinetriphosphate triphosphohydrolase-like protein (402 aa).

The HD domain occupies 69–217 (RLTHSLEVAQ…AAIADDIAYD (149 aa)).

This sequence belongs to the dGTPase family. Type 2 subfamily.

The polypeptide is Deoxyguanosinetriphosphate triphosphohydrolase-like protein (Bradyrhizobium diazoefficiens (strain JCM 10833 / BCRC 13528 / IAM 13628 / NBRC 14792 / USDA 110)).